Here is a 297-residue protein sequence, read N- to C-terminus: ATP synthase gamma chain (297 aa).

The protein belongs to the ATPase gamma chain family. F-type ATPases have 2 components, CF(1) - the catalytic core - and CF(0) - the membrane proton channel. CF(1) has five subunits: alpha(3), beta(3), gamma(1), delta(1), epsilon(1). CF(0) has three main subunits: a, b and c.

The protein localises to the cell membrane. Produces ATP from ADP in the presence of a proton gradient across the membrane. The gamma chain is believed to be important in regulating ATPase activity and the flow of protons through the CF(0) complex. In Renibacterium salmoninarum (strain ATCC 33209 / DSM 20767 / JCM 11484 / NBRC 15589 / NCIMB 2235), this protein is ATP synthase gamma chain.